Here is a 287-residue protein sequence, read N- to C-terminus: Ribosomal RNA small subunit methyltransferase A (287 aa).

Positions 28, 30, 55, 77, 103, and 123 each coordinate S-adenosyl-L-methionine.

Belongs to the class I-like SAM-binding methyltransferase superfamily. rRNA adenine N(6)-methyltransferase family. RsmA subfamily.

Its subcellular location is the cytoplasm. The catalysed reaction is adenosine(1518)/adenosine(1519) in 16S rRNA + 4 S-adenosyl-L-methionine = N(6)-dimethyladenosine(1518)/N(6)-dimethyladenosine(1519) in 16S rRNA + 4 S-adenosyl-L-homocysteine + 4 H(+). Specifically dimethylates two adjacent adenosines (A1518 and A1519) in the loop of a conserved hairpin near the 3'-end of 16S rRNA in the 30S particle. May play a critical role in biogenesis of 30S subunits. The sequence is that of Ribosomal RNA small subunit methyltransferase A from Nitrobacter winogradskyi (strain ATCC 25391 / DSM 10237 / CIP 104748 / NCIMB 11846 / Nb-255).